The primary structure comprises 46 residues: Large ribosomal subunit protein bL34 (46 aa).

The interval 25–46 (TASGRQVLRRRRAKGRYRLAVS) is disordered. Positions 31–46 (VLRRRRAKGRYRLAVS) are enriched in basic residues.

This sequence belongs to the bacterial ribosomal protein bL34 family.

This Synechococcus sp. (strain JA-3-3Ab) (Cyanobacteria bacterium Yellowstone A-Prime) protein is Large ribosomal subunit protein bL34.